The primary structure comprises 515 residues: Fatty acyl-CoA reductase 1 (515 aa).

Topologically, residues 1 to 465 (MVSIPEYYEG…ARKHLNKLRN (465 aa)) are cytoplasmic. A necessary and sufficient for PEX19-mediated localization into peroxisome membrane region spans residues 451 to 507 (SGLPAARKHLNKLRNIRYGFNTILVILIWRIFIARSQMARNIWYFVVSLCYKFLSYF). The helical transmembrane segment at 466-483 (IRYGFNTILVILIWRIFI) threads the bilayer. Residues 484–515 (ARSQMARNIWYFVVSLCYKFLSYFRASSTMRY) are Peroxisomal-facing.

This sequence belongs to the fatty acyl-CoA reductase family. As to quaternary structure, interacts with PEX19; PEX19 mediates the targeting of FAR1 to peroxisomes.

Its subcellular location is the peroxisome membrane. The enzyme catalyses a long-chain fatty acyl-CoA + 2 NADPH + 2 H(+) = a long-chain primary fatty alcohol + 2 NADP(+) + CoA. The catalysed reaction is hexadecanoyl-CoA + 2 NADPH + 2 H(+) = hexadecan-1-ol + 2 NADP(+) + CoA. It catalyses the reaction octadecanoyl-CoA + 2 NADPH + 2 H(+) = octadecan-1-ol + 2 NADP(+) + CoA. It carries out the reaction (9Z)-octadecenoyl-CoA + 2 NADPH + 2 H(+) = (9Z)-octadecen-1-ol + 2 NADP(+) + CoA. The enzyme catalyses (9Z,12Z)-octadecadienoyl-CoA + 2 NADPH + 2 H(+) = (9Z,12Z)-octadecadien-1-ol + 2 NADP(+) + CoA. The catalysed reaction is eicosanoyl-CoA + 2 NADPH + 2 H(+) = eicosan-1-ol + 2 NADP(+) + CoA. It catalyses the reaction 16-methylheptadecanoyl-CoA + 2 NADPH + 2 H(+) = 16-methylheptadecan-1-ol + 2 NADP(+) + CoA. It carries out the reaction 18-methylnonadecanoyl-CoA + 2 NADPH + 2 H(+) = 18-methylnonadecan-1-ol + 2 NADP(+) + CoA. Its function is as follows. Catalyzes the reduction of saturated and unsaturated C16 or C18 fatty acyl-CoA to fatty alcohols. It plays an essential role in the production of ether lipids/plasmalogens which synthesis requires fatty alcohols. In parallel, it is also required for wax monoesters production since fatty alcohols also constitute a substrate for their synthesis. The protein is Fatty acyl-CoA reductase 1 of Pongo abelii (Sumatran orangutan).